A 267-amino-acid polypeptide reads, in one-letter code: Ribonuclease HII (267 aa).

The RNase H type-2 domain maps to 57 to 245 (WPVAGCDEVG…VVAARERHRA (189 aa)). D63, E64, and D154 together coordinate a divalent metal cation.

The protein belongs to the RNase HII family. The cofactor is Mn(2+). Requires Mg(2+) as cofactor.

Its subcellular location is the cytoplasm. It catalyses the reaction Endonucleolytic cleavage to 5'-phosphomonoester.. Functionally, endonuclease that specifically degrades the RNA of RNA-DNA hybrids. The chain is Ribonuclease HII from Nitrobacter hamburgensis (strain DSM 10229 / NCIMB 13809 / X14).